Consider the following 317-residue polypeptide: Lipase 1 (317 aa).

The first 18 residues, 1–18, serve as a signal peptide directing secretion; the sequence is MLLKRLCFAALFSLSMVG. Cys19 carries the N-palmitoyl cysteine lipid modification. The S-diacylglycerol cysteine moiety is linked to residue Cys19. The AB hydrolase-1 domain occupies 69–296; that stretch reads PLLLIHGFGG…MEDVGHVPMV (228 aa). His74 is an active-site residue. Ser142 acts as the Nucleophile in catalysis. Catalysis depends on charge relay system residues Glu270 and His292.

Its subcellular location is the cell outer membrane. It catalyses the reaction a triacylglycerol + H2O = a diacylglycerol + a fatty acid + H(+). This is Lipase 1 (lip1) from Psychrobacter immobilis.